A 1665-amino-acid chain; its full sequence is Cortactin-binding protein 2 (1665 aa).

Positions 120 to 277 (RKMQERMSTQ…EQLKRGNDSK (158 aa)) form a coiled coil. 3 disordered regions span residues 203–222 (EKKK…RRST), 368–480 (VSSV…SPTS), and 500–620 (RFTS…PSID). 2 stretches are compositionally biased toward polar residues: residues 388-399 (SIGSTPDLASST) and 410-429 (TGQT…SMHS). Residues 455–469 (QGNANDQDQNGNTTQ) show a composition bias toward low complexity. Over residues 470–480 (SPPSRDVSPTS) the composition is skewed to polar residues. Arg500 carries the asymmetric dimethylarginine modification. ANK repeat units lie at residues 711–741 (GRPT…DINY), 745–774 (DGHS…QIDA), 778–807 (NGFT…NIDH), 811–840 (GGQT…DRSV), and 844–873 (DGWT…PTLG). Residues 875-902 (SLNEEEPEPGAFDLDQGQEGSEGTAKPV) form a disordered region. The ANK 6 repeat unit spans residues 914 to 944 (EGWTAAHIAASKGFKNCLEILCRHGGLEPER). A disordered region spans residues 1447–1495 (CSKKKGENGAWRKVSTNPRKKSGRFSSPTWSKPDLGEEGTKNKTMSQPN). Ser1526 carries the phosphoserine modification. Positions 1575 to 1665 (NNLRMPVSQK…KNEQVQKPNK (91 aa)) are disordered. Composition is skewed to low complexity over residues 1590-1604 (SSHQ…TSKT) and 1623-1641 (SQCS…TRQT). Over residues 1656-1665 (KNEQVQKPNK) the composition is skewed to polar residues.

Interacts with CTTN/cortactin SH3 domain. Interacts with STRN, STRN4/zinedin and MOB4/phocein; this interactions mediate the association with the STRIPAK core complex and may regulate dendritic spine distribution of the STRIPAK complex in hippocampal neurons. Activation of glutamate receptors weakens the interaction with STRN and STRN4.

Its subcellular location is the cytoplasm. It localises to the cell cortex. It is found in the cell projection. The protein resides in the dendritic spine. Regulates the dendritic spine distribution of CTTN/cortactin in hippocampal neurons, and thus controls dendritic spinogenesis and dendritic spine maintenance. Associates with the striatin-interacting phosphatase and kinase (STRIPAK) core complex to regulate dendritic spine distribution of the STRIPAK complex in hippocampal neurons. This Dasypus novemcinctus (Nine-banded armadillo) protein is Cortactin-binding protein 2 (CTTNBP2).